Consider the following 181-residue polypeptide: Monofunctional chorismate mutase (181 aa).

A signal peptide spans Met1–Ala20. Positions Asp21–Leu102 constitute a Chorismate mutase domain. Residues Arg38, Lys49, Asp58, Glu62, and Gln98 each contribute to the substrate site.

Its subcellular location is the periplasm. The catalysed reaction is chorismate = prephenate. Its pathway is metabolic intermediate biosynthesis; prephenate biosynthesis; prephenate from chorismate: step 1/1. Functionally, catalyzes the Claisen rearrangement of chorismate to prephenate. The protein is Monofunctional chorismate mutase of Salmonella typhimurium.